The chain runs to 483 residues: Glutamate--tRNA ligase (483 aa).

Residues Pro-9–Thr-19 carry the 'HIGH' region motif. The 'KMSKS' region motif lies at Lys-250–Arg-254. Lys-253 serves as a coordination point for ATP.

Belongs to the class-I aminoacyl-tRNA synthetase family. Glutamate--tRNA ligase type 1 subfamily. Monomer.

It is found in the cytoplasm. It carries out the reaction tRNA(Glu) + L-glutamate + ATP = L-glutamyl-tRNA(Glu) + AMP + diphosphate. In terms of biological role, catalyzes the attachment of glutamate to tRNA(Glu) in a two-step reaction: glutamate is first activated by ATP to form Glu-AMP and then transferred to the acceptor end of tRNA(Glu). The polypeptide is Glutamate--tRNA ligase (Synechocystis sp. (strain ATCC 27184 / PCC 6803 / Kazusa)).